The primary structure comprises 143 residues: Large ribosomal subunit protein uL15 (143 aa).

Residues 1–59 (MELNGIKPADGAKHYKRRVGRGIGSGIGKTAGRGHKGQKSRAGGYHKVGFEGGQMPMQR) are disordered. The segment covering 21–31 (RGIGSGIGKTA) has biased composition (gly residues).

This sequence belongs to the universal ribosomal protein uL15 family. Part of the 50S ribosomal subunit.

In terms of biological role, binds to the 23S rRNA. The polypeptide is Large ribosomal subunit protein uL15 (Albidiferax ferrireducens (strain ATCC BAA-621 / DSM 15236 / T118) (Rhodoferax ferrireducens)).